We begin with the raw amino-acid sequence, 1649 residues long: PHD and RING finger domain-containing protein 1 (1649 aa).

Residues M1–D79 form a disordered region. S5 carries the post-translational modification Phosphoserine. The span at T54–D79 shows a compositional bias: acidic residues. The RING-type; degenerate zinc-finger motif lies at C108–R149. Residues P183–P233 form a PHD-type zinc finger. The interval V324–G398 is disordered. The residue at position 330 (T330) is a Phosphothreonine. The segment covering P334 to T353 has biased composition (basic residues). Positions P354–T366 are enriched in low complexity. Basic residues predominate over residues R367–K382. Residues S445 and S455 each carry the phosphoserine modification. Disordered stretches follow at residues K534–V600, S644–Q871, F888–L1240, and I1281–R1395. Residues S568–S589 are compositionally biased toward polar residues. Composition is skewed to basic and acidic residues over residues I685 to A697 and T727 to G742. The segment covering A786–F796 has biased composition (polar residues). Over residues P802–N812 the composition is skewed to basic and acidic residues. 6 positions are modified to phosphoserine: S814, S845, S846, S864, S867, and S915. Composition is skewed to polar residues over residues P835–E848 and I859–Q871. A Phosphothreonine modification is found at T917. S936, S973, and S991 each carry phosphoserine. The span at R988–S999 shows a compositional bias: low complexity. Over residues R1000–S1011 the composition is skewed to basic residues. The segment covering R1012–S1030 has biased composition (basic and acidic residues). Basic residues predominate over residues R1043–R1053. Positions S1054–E1063 are enriched in basic and acidic residues. A compositionally biased stretch (basic residues) spans R1064 to R1090. Over residues S1091–Y1101 the composition is skewed to low complexity. A compositionally biased stretch (basic residues) spans S1106–P1118. A phosphoserine mark is found at S1124 and S1128. Composition is skewed to basic and acidic residues over residues R1141–S1151 and R1181–V1198. A phosphoserine mark is found at S1202 and S1229. Positions D1284 to S1297 are enriched in low complexity. The span at H1345–E1356 shows a compositional bias: basic and acidic residues. Phosphoserine is present on residues S1359, S1360, and S1371. A Phosphothreonine modification is found at T1404. Disordered stretches follow at residues L1407 to E1439, F1455 to S1486, T1526 to K1556, and M1630 to G1649. The segment covering P1531–N1540 has biased composition (polar residues). Residues S1541 to K1556 are compositionally biased toward basic and acidic residues. Residues R1549 to K1579 are a coiled coil.

In terms of assembly, interacts with POLR2A (via the C-terminal domain).

This Homo sapiens (Human) protein is PHD and RING finger domain-containing protein 1 (PHRF1).